We begin with the raw amino-acid sequence, 89 residues long: uncharacterized protein (89 aa).

To Rhizobium NGR234A y4oN.

This is an uncharacterized protein from Sinorhizobium fredii (strain NBRC 101917 / NGR234).